Here is a 100-residue protein sequence, read N- to C-terminus: MRGTRRGPSGGWSPLGLALPRYPAGSVAASDPRSDTPPPRAPPPPPPLTTSAYRPHTHPAAESGARTRAEHARQHARHRPPEVTEPVHVPVLAGVCARVP.

A disordered region spans residues 1-86 (MRGTRRGPSG…RHRPPEVTEP (86 aa)). The span at 35–48 (DTPPPRAPPPPPPL) shows a compositional bias: pro residues.

This is an uncharacterized protein from Human herpesvirus 6A (strain Uganda-1102) (HHV-6 variant A).